The primary structure comprises 64 residues: Ferredoxin-like protein in nif region (64 aa).

Residues 2–30 (AFKIIASQCTQCGACEFECPSNAIELKGE) enclose the 4Fe-4S ferredoxin-type domain. Residues Cys10, Cys13, Cys16, Cys20, Cys39, Cys42, Cys51, and Cys55 each contribute to the [4Fe-4S] cluster site.

The cofactor is [4Fe-4S] cluster.

The polypeptide is Ferredoxin-like protein in nif region (fdxN) (Sinorhizobium fredii (strain NBRC 101917 / NGR234)).